A 481-amino-acid polypeptide reads, in one-letter code: Small ribosomal subunit protein bS1 (481 aa).

S1 motif domains follow at residues 36 to 105 (GDIV…LSKK), 123 to 188 (DEAV…LSRR), 209 to 277 (GTIR…LSLK), and 294 to 363 (GQIV…LSLK). The segment at 429-467 (TAQMEKFAAAEAAGRGADDQSSASSAPSEKTAGGSLASD) is disordered. The segment covering 437–456 (AAEAAGRGADDQSSASSAPS) has biased composition (low complexity).

The protein belongs to the bacterial ribosomal protein bS1 family.

Binds mRNA; thus facilitating recognition of the initiation point. It is needed to translate mRNA with a short Shine-Dalgarno (SD) purine-rich sequence. The chain is Small ribosomal subunit protein bS1 (rpsA) from Mycobacterium tuberculosis (strain CDC 1551 / Oshkosh).